Reading from the N-terminus, the 373-residue chain is Indole glucosinolate O-methyltransferase 3 (373 aa).

Gly217, Asp240, Asp260, Met261, and Lys274 together coordinate S-adenosyl-L-homocysteine. The active-site Proton acceptor is His278.

This sequence belongs to the class I-like SAM-binding methyltransferase superfamily. Cation-independent O-methyltransferase family.

Its pathway is secondary metabolite biosynthesis. In terms of biological role, involved in indole glucosinolate biosynthesis. Catalyzes methoxylation reactions of the glucosinolate indole ring. Converts the hydroxy intermediates 4-hydroxy-indol-3-yl-methylglucosinolate (4OH-I3M) and 1-hydroxy-indol-3-yl-methylglucosinolate (1OH-I3M) to 4-methoxy-indol-3-yl-methylglucosinolate (4MO-I3M) and 1-methoxy-indol-3-yl-methylglucosinolate(1MO-I3M), respectively. This Arabidopsis thaliana (Mouse-ear cress) protein is Indole glucosinolate O-methyltransferase 3.